The sequence spans 542 residues: Hydroxylamine reductase (542 aa).

Residues C3, C6, C15, and C21 each coordinate [4Fe-4S] cluster. Hybrid [4Fe-2O-2S] cluster contacts are provided by H238, E262, C307, C398, C426, C451, E485, and K487. C398 bears the Cysteine persulfide mark.

It belongs to the HCP family. [4Fe-4S] cluster is required as a cofactor. Hybrid [4Fe-2O-2S] cluster serves as cofactor.

Its subcellular location is the cytoplasm. The enzyme catalyses A + NH4(+) + H2O = hydroxylamine + AH2 + H(+). In terms of biological role, catalyzes the reduction of hydroxylamine to form NH(3) and H(2)O. This is Hydroxylamine reductase from Microcystis aeruginosa (strain NIES-843 / IAM M-2473).